The sequence spans 122 residues: Aspartate 1-decarboxylase (122 aa).

Residue Ser-25 is the Schiff-base intermediate with substrate; via pyruvic acid of the active site. Ser-25 bears the Pyruvic acid (Ser) mark. Thr-57 contacts substrate. The active-site Proton donor is Tyr-58. Residue 73–75 (GAA) coordinates substrate.

The protein belongs to the PanD family. As to quaternary structure, heterooctamer of four alpha and four beta subunits. Pyruvate is required as a cofactor. Is synthesized initially as an inactive proenzyme, which is activated by self-cleavage at a specific serine bond to produce a beta-subunit with a hydroxyl group at its C-terminus and an alpha-subunit with a pyruvoyl group at its N-terminus.

It is found in the cytoplasm. The catalysed reaction is L-aspartate + H(+) = beta-alanine + CO2. It functions in the pathway cofactor biosynthesis; (R)-pantothenate biosynthesis; beta-alanine from L-aspartate: step 1/1. Functionally, catalyzes the pyruvoyl-dependent decarboxylation of aspartate to produce beta-alanine. In Bordetella pertussis (strain Tohama I / ATCC BAA-589 / NCTC 13251), this protein is Aspartate 1-decarboxylase.